The following is a 134-amino-acid chain: Profilin-4 (134 aa).

C13 and C118 are oxidised to a cystine. The short motif at A84–T100 is the Involved in PIP2 interaction element. The residue at position 114 (T114) is a Phosphothreonine.

Belongs to the profilin family. As to quaternary structure, occurs in many kinds of cells as a complex with monomeric actin in a 1:1 ratio. In terms of processing, phosphorylated by MAP kinases.

Its subcellular location is the cytoplasm. It is found in the cytoskeleton. Functionally, binds to actin and affects the structure of the cytoskeleton. At high concentrations, profilin prevents the polymerization of actin, whereas it enhances it at low concentrations. The sequence is that of Profilin-4 from Olea europaea (Common olive).